The primary structure comprises 189 residues: GTPase HRas (189 aa).

An N-acetylmethionine; in GTPase HRas; alternate modification is found at Met1. Position 2 is an N-acetylthreonine; in GTPase HRas, N-terminally processed (Thr2). GTP is bound by residues 13–18 (GVGKSA), 29–35 (VDEYDPT), 59–60 (AG), 116–119 (NKCD), and 145–147 (SAK). The Effector region signature appears at 32 to 40 (YDPTIEDSY). (Microbial infection) O-linked (Glc) threonine; by P.sordellii toxin TcsL glycosylation occurs at Thr35. Residue Cys118 is modified to S-nitrosocysteine. The hypervariable region stretch occupies residues 166–185 (HKLRKLNPPDESGPGCMSCK). A Glycyl lysine isopeptide (Lys-Gly) (interchain with G-Cter in ubiquitin) cross-link involves residue Lys170. Cys181 carries the S-palmitoyl cysteine lipid modification. A lipid anchor (S-(15-deoxy-Delta12,14-prostaglandin J2-9-yl)cysteine; alternate) is attached at Cys184. Cys184 carries S-palmitoyl cysteine; alternate lipidation. Residue Cys186 is modified to Cysteine methyl ester. Cys186 is lipidated: S-farnesyl cysteine. Positions 187–189 (VLS) are cleaved as a propeptide — removed in mature form.

It belongs to the small GTPase superfamily. Ras family. As to quaternary structure, in its GTP-bound form interacts with PLCE1. Interacts with TBC1D10C. Interacts with RGL3. Interacts with HSPD1. Found in a complex with at least BRAF, HRAS, MAP2K1, MAPK3 and RGS14. Interacts (active GTP-bound form) with RGS14 (via RBD 1 domain). Forms a signaling complex with RASGRP1 and DGKZ. Interacts with RASSF5. Interacts with PDE6D. Interacts with IKZF3. Interacts with RACK1. Interacts with PIK3CG; the interaction is required for membrane recruitment and beta-gamma G protein dimer-dependent activation of the PI3K gamma complex PIK3CG:PIK3R6. Interacts with RAPGEF2. Interacts (active GTP-bound form) with both SHOC2 and PP1c (all isoforms) to form a tertiary complex; SHOC2 and PP1c preferably bind M-Ras/MRAS, but they also bind K-Ras/KRAS, N-Ras/NRAS and H-Ras/HRAS. Interacts (GTP-bound form) with MAPKAP1/SIN1; inhibiting H-Ras/HRAS activity. Palmitoylated by the ZDHHC9-GOLGA7 complex. A continuous cycle of de- and re-palmitoylation regulates rapid exchange between plasma membrane and Golgi. Post-translationally, S-nitrosylated; critical for redox regulation. Important for stimulating guanine nucleotide exchange. No structural perturbation on nitrosylation. In terms of processing, the covalent modification of cysteine by 15-deoxy-Delta12,14-prostaglandin-J2 is autocatalytic and reversible. It may occur as an alternative to other cysteine modifications, such as S-nitrosylation and S-palmitoylation. Acetylation at Lys-104 prevents interaction with guanine nucleotide exchange factors (GEFs). Post-translationally, fatty-acylated at Lys-170. In terms of processing, ubiquitinated by the BCR(LZTR1) E3 ubiquitin ligase complex at Lys-170 in a non-degradative manner, leading to inhibit Ras signaling by decreasing Ras association with membranes. (Microbial infection) Glucosylated at Thr-35 by P.sordellii toxin TcsL. Monoglucosylation completely prevents the recognition of the downstream effector, blocking the GTPases in their inactive form, leading to inhibit Ras signaling. In terms of tissue distribution, widely expressed.

The protein localises to the cell membrane. It localises to the golgi apparatus. It is found in the golgi apparatus membrane. Its subcellular location is the nucleus. The protein resides in the cytoplasm. The protein localises to the perinuclear region. The catalysed reaction is GTP + H2O = GDP + phosphate + H(+). With respect to regulation, alternates between an inactive form bound to GDP and an active form bound to GTP. Activated by a guanine nucleotide-exchange factor (GEF) and inactivated by a GTPase-activating protein (GAP). Involved in the activation of Ras protein signal transduction. Ras proteins bind GDP/GTP and possess intrinsic GTPase activity. This is GTPase HRas (HRAS) from Homo sapiens (Human).